A 589-amino-acid chain; its full sequence is Probable translation initiation factor IF-2 (589 aa).

The 222-residue stretch at 4 to 225 folds into the tr-type G domain; that stretch reads VRSPFVVVMG…AGVSQRFIPR (222 aa). The tract at residues 13-20 is G1; it reads GHVDVGKT. Position 13 to 20 (13 to 20) interacts with GTP; that stretch reads GHVDVGKT. Residues 38–42 form a G2 region; it reads MITQH. The segment at 79–82 is G3; that stretch reads DTPG. Residues 79–83 and 133–136 each bind GTP; these read DTPGH and NKLD. The tract at residues 133–136 is G4; that stretch reads NKLD. Residues 201–203 are G5; the sequence is SAV.

It belongs to the TRAFAC class translation factor GTPase superfamily. Classic translation factor GTPase family. IF-2 subfamily.

Functionally, function in general translation initiation by promoting the binding of the formylmethionine-tRNA to ribosomes. Seems to function along with eIF-2. This chain is Probable translation initiation factor IF-2, found in Pyrobaculum aerophilum (strain ATCC 51768 / DSM 7523 / JCM 9630 / CIP 104966 / NBRC 100827 / IM2).